We begin with the raw amino-acid sequence, 161 residues long: Phosphopantetheine adenylyltransferase (161 aa).

T9 is a substrate binding site. ATP is bound by residues 9 to 10 and H17; that span reads TF. Substrate contacts are provided by K41, L73, and R87. Residues 88-90, E98, and 123-129 contribute to the ATP site; these read GLR and YQFISGT.

Belongs to the bacterial CoaD family. As to quaternary structure, homohexamer. The cofactor is Mg(2+).

The protein resides in the cytoplasm. The catalysed reaction is (R)-4'-phosphopantetheine + ATP + H(+) = 3'-dephospho-CoA + diphosphate. The protein operates within cofactor biosynthesis; coenzyme A biosynthesis; CoA from (R)-pantothenate: step 4/5. Functionally, reversibly transfers an adenylyl group from ATP to 4'-phosphopantetheine, yielding dephospho-CoA (dPCoA) and pyrophosphate. The sequence is that of Phosphopantetheine adenylyltransferase from Cupriavidus necator (strain ATCC 17699 / DSM 428 / KCTC 22496 / NCIMB 10442 / H16 / Stanier 337) (Ralstonia eutropha).